The chain runs to 160 residues: Cytochrome b6-f complex subunit 4 (160 aa).

The next 3 membrane-spanning stretches (helical) occupy residues 36–56 (LLYI…GLAV), 95–115 (LLGI…PFIE), and 128–148 (IAMS…IGAC).

It belongs to the cytochrome b family. PetD subfamily. The 4 large subunits of the cytochrome b6-f complex are cytochrome b6, subunit IV (17 kDa polypeptide, PetD), cytochrome f and the Rieske protein, while the 4 small subunits are PetG, PetL, PetM and PetN. The complex functions as a dimer.

The protein resides in the cellular thylakoid membrane. Component of the cytochrome b6-f complex, which mediates electron transfer between photosystem II (PSII) and photosystem I (PSI), cyclic electron flow around PSI, and state transitions. This chain is Cytochrome b6-f complex subunit 4, found in Prochlorococcus marinus (strain MIT 9312).